A 271-amino-acid chain; its full sequence is Elongation factor Ts (271 aa).

An involved in Mg(2+) ion dislocation from EF-Tu region spans residues 76–79; it reads TDFV.

This sequence belongs to the EF-Ts family.

The protein localises to the cytoplasm. In terms of biological role, associates with the EF-Tu.GDP complex and induces the exchange of GDP to GTP. It remains bound to the aminoacyl-tRNA.EF-Tu.GTP complex up to the GTP hydrolysis stage on the ribosome. This Mycobacterium bovis (strain BCG / Pasteur 1173P2) protein is Elongation factor Ts.